The chain runs to 290 residues: uncharacterized protein (290 aa).

It belongs to the glycosyltransferase 2 family.

This is an uncharacterized protein from Methanocaldococcus jannaschii (strain ATCC 43067 / DSM 2661 / JAL-1 / JCM 10045 / NBRC 100440) (Methanococcus jannaschii).